The primary structure comprises 81 residues: Photosystem I iron-sulfur center (81 aa).

2 4Fe-4S ferredoxin-type domains span residues 2–31 (AHSV…MIPW) and 39–68 (IASA…VRVY). The [4Fe-4S] cluster site is built by Cys-11, Cys-14, Cys-17, Cys-21, Cys-48, Cys-51, Cys-54, and Cys-58.

In terms of assembly, the eukaryotic PSI reaction center is composed of at least 11 subunits. It depends on [4Fe-4S] cluster as a cofactor.

It localises to the plastid. The protein resides in the chloroplast thylakoid membrane. The enzyme catalyses reduced [plastocyanin] + hnu + oxidized [2Fe-2S]-[ferredoxin] = oxidized [plastocyanin] + reduced [2Fe-2S]-[ferredoxin]. Functionally, apoprotein for the two 4Fe-4S centers FA and FB of photosystem I (PSI); essential for photochemical activity. FB is the terminal electron acceptor of PSI, donating electrons to ferredoxin. The C-terminus interacts with PsaA/B/D and helps assemble the protein into the PSI complex. Required for binding of PsaD and PsaE to PSI. PSI is a plastocyanin-ferredoxin oxidoreductase, converting photonic excitation into a charge separation, which transfers an electron from the donor P700 chlorophyll pair to the spectroscopically characterized acceptors A0, A1, FX, FA and FB in turn. In Adiantum capillus-veneris (Maidenhair fern), this protein is Photosystem I iron-sulfur center.